The sequence spans 388 residues: Spermidine/putrescine import ATP-binding protein PotA (388 aa).

The ABC transporter domain occupies 17 to 247 (IEIDHVTKRF…PATVFVANFI (231 aa)). Residue 49 to 56 (GPSGCGKT) participates in ATP binding.

It belongs to the ABC transporter superfamily. Spermidine/putrescine importer (TC 3.A.1.11.1) family. The complex is composed of two ATP-binding proteins (PotA), two transmembrane proteins (PotB and PotC) and a solute-binding protein (PotD).

It is found in the cell membrane. The enzyme catalyses ATP + H2O + polyamine-[polyamine-binding protein]Side 1 = ADP + phosphate + polyamineSide 2 + [polyamine-binding protein]Side 1.. In terms of biological role, part of the ABC transporter complex PotABCD involved in spermidine/putrescine import. Responsible for energy coupling to the transport system. This chain is Spermidine/putrescine import ATP-binding protein PotA, found in Mycobacterium sp. (strain KMS).